The following is a 194-amino-acid chain: Putative L,D-transpeptidase YciB (194 aa).

An N-terminal signal peptide occupies residues 1-19 (MKLSLFIIAVLMPVILLSA). C20 carries the N-palmitoyl cysteine lipid modification. Residue C20 is the site of S-diacylglycerol cysteine attachment. The L,D-TPase catalytic domain maps to 68-194 (VWIDVNVKEQ…IPEHTKVVIS (127 aa)). The active-site Proton donor/acceptor is the H144. Catalysis depends on C170, which acts as the Nucleophile.

This sequence belongs to the YkuD family.

Its subcellular location is the cell membrane. Its pathway is cell wall biogenesis; peptidoglycan biosynthesis. This is Putative L,D-transpeptidase YciB (yciB) from Bacillus subtilis (strain 168).